Here is a 1014-residue protein sequence, read N- to C-terminus: Disease resistance protein RGA4 (1014 aa).

The structured coiled coil (CC) domain stretch occupies residues 1 to 182 (MEAALLSGFI…PRIHEADLVG (182 aa)). Residues 105–145 (RTVRATKKLLQTNQHLAQELQRLKRMVEEANQRKQRYTAAA) adopt a coiled-coil conformation. The NB-ARC domain maps to 189 to 466 (ELLEQLAERQ…WLAEGFVEPV (278 aa)). 11 LRR repeats span residues 484–506 (RNII…TYGM), 507–530 (MREF…DKFL), 531–552 (PKYV…NFNG), 580–602 (LRVL…ICNL), 603–624 (VLLK…IAKL), 625–647 (KDLE…VFGL), 701–725 (MNKL…DLRE), 762–784 (PCYL…VTSL), 785–807 (RGLK…ALSN), 808–833 (LSYL…GFPR), and 854–877 (LPFL…KIEC).

It belongs to the disease resistance NB-LRR family. As to expression, expressed in leaves.

In terms of biological role, probable disease resistance protein. Resistance proteins guard the plant against pathogens that contain an appropriate avirulence protein via an indirect interaction with this avirulence protein. That triggers a defense system including the hypersensitive response, which restricts the pathogen growth. At the opposite of cultivars Aichi asahi and Sasanishiki, the cultivars Nipponbare, Mokoto and Hitomebore don't recognize the effector avirulence protein AVR-Pia from M.oryzae. This is Disease resistance protein RGA4 from Oryza sativa subsp. japonica (Rice).